The primary structure comprises 314 residues: tRNA dimethylallyltransferase (314 aa).

12 to 19 (GPTAGGKS) contacts ATP. 14-19 (TAGGKS) contributes to the substrate binding site. Residues 37-40 (DSMQ) form an interaction with substrate tRNA region.

This sequence belongs to the IPP transferase family. As to quaternary structure, monomer. Mg(2+) serves as cofactor.

It carries out the reaction adenosine(37) in tRNA + dimethylallyl diphosphate = N(6)-dimethylallyladenosine(37) in tRNA + diphosphate. Its function is as follows. Catalyzes the transfer of a dimethylallyl group onto the adenine at position 37 in tRNAs that read codons beginning with uridine, leading to the formation of N6-(dimethylallyl)adenosine (i(6)A). The protein is tRNA dimethylallyltransferase of Rhodospirillum centenum (strain ATCC 51521 / SW).